The chain runs to 390 residues: Cathepsin D (390 aa).

The propeptide at 1-44 (VIRIPLHKFTSIRRTMSEAAGXVXXLIAKGPISKYATGEPAVRQ) is activation peptide. Positions 59-385 (YYGEIGIGTP…DRDQNRVGLA (327 aa)) constitute a Peptidase A1 domain. 2 disulfides stabilise this stretch: cysteine 71–cysteine 140 and cysteine 90–cysteine 97. Aspartate 77 is an active-site residue. N-linked (GlcNAc...) asparagine glycans are attached at residues asparagine 114 and asparagine 241. A disulfide bridge connects residues cysteine 264 and cysteine 268. Aspartate 273 is a catalytic residue. Cysteine 307 and cysteine 344 are disulfide-bonded.

It belongs to the peptidase A1 family. In terms of assembly, consists of a light chain and a heavy chain. Interacts with ADAM30; this leads to activation of CTSD. Interacts with GRN; stabilizes CTSD; increases its proteolytic activity. N- and O-glycosylated. In terms of processing, undergoes proteolytic cleavage and activation by ADAM30.

It is found in the lysosome. The protein resides in the melanosome. It localises to the secreted. Its subcellular location is the extracellular space. The enzyme catalyses Specificity similar to, but narrower than, that of pepsin A. Does not cleave the 4-Gln-|-His-5 bond in B chain of insulin.. Functionally, acid protease active in intracellular protein breakdown. Plays a role in APP processing following cleavage and activation by ADAM30 which leads to APP degradation. The polypeptide is Cathepsin D (CTSD) (Bos taurus (Bovine)).